The following is a 202-amino-acid chain: N-(5'-phosphoribosyl)anthranilate isomerase (202 aa).

It belongs to the TrpF family.

It carries out the reaction N-(5-phospho-beta-D-ribosyl)anthranilate = 1-(2-carboxyphenylamino)-1-deoxy-D-ribulose 5-phosphate. The protein operates within amino-acid biosynthesis; L-tryptophan biosynthesis; L-tryptophan from chorismate: step 3/5. This is N-(5'-phosphoribosyl)anthranilate isomerase from Listeria monocytogenes serotype 4a (strain HCC23).